Consider the following 213-residue polypeptide: Uridine kinase (213 aa).

Residue 15 to 22 (GASASGKS) coordinates ATP.

It belongs to the uridine kinase family.

The protein resides in the cytoplasm. It catalyses the reaction uridine + ATP = UMP + ADP + H(+). The catalysed reaction is cytidine + ATP = CMP + ADP + H(+). Its pathway is pyrimidine metabolism; CTP biosynthesis via salvage pathway; CTP from cytidine: step 1/3. The protein operates within pyrimidine metabolism; UMP biosynthesis via salvage pathway; UMP from uridine: step 1/1. The chain is Uridine kinase from Yersinia pseudotuberculosis serotype O:1b (strain IP 31758).